The following is a 242-amino-acid chain: UPF0246 protein SPD_1378 (242 aa).

The protein belongs to the UPF0246 family.

This is UPF0246 protein SPD_1378 from Streptococcus pneumoniae serotype 2 (strain D39 / NCTC 7466).